The chain runs to 191 residues: Potassium-transporting ATPase KdpC subunit (191 aa).

Residues 6 to 26 traverse the membrane as a helical segment; that stretch reads PAILLFILLTLVTGGLYPLLT.

Belongs to the KdpC family. As to quaternary structure, the system is composed of three essential subunits: KdpA, KdpB and KdpC.

Its subcellular location is the cell inner membrane. Its function is as follows. Part of the high-affinity ATP-driven potassium transport (or Kdp) system, which catalyzes the hydrolysis of ATP coupled with the electrogenic transport of potassium into the cytoplasm. This subunit acts as a catalytic chaperone that increases the ATP-binding affinity of the ATP-hydrolyzing subunit KdpB by the formation of a transient KdpB/KdpC/ATP ternary complex. This chain is Potassium-transporting ATPase KdpC subunit, found in Enterobacter sp. (strain 638).